Here is a 420-residue protein sequence, read N- to C-terminus: Serine hydroxymethyltransferase (420 aa).

(6S)-5,6,7,8-tetrahydrofolate contacts are provided by residues Leu117 and 121-123; that span reads GHL. Lys226 bears the N6-(pyridoxal phosphate)lysine mark.

This sequence belongs to the SHMT family. As to quaternary structure, homodimer. Pyridoxal 5'-phosphate is required as a cofactor.

It is found in the cytoplasm. The enzyme catalyses (6R)-5,10-methylene-5,6,7,8-tetrahydrofolate + glycine + H2O = (6S)-5,6,7,8-tetrahydrofolate + L-serine. The protein operates within one-carbon metabolism; tetrahydrofolate interconversion. Its pathway is amino-acid biosynthesis; glycine biosynthesis; glycine from L-serine: step 1/1. Its function is as follows. Catalyzes the reversible interconversion of serine and glycine with tetrahydrofolate (THF) serving as the one-carbon carrier. This reaction serves as the major source of one-carbon groups required for the biosynthesis of purines, thymidylate, methionine, and other important biomolecules. Also exhibits THF-independent aldolase activity toward beta-hydroxyamino acids, producing glycine and aldehydes, via a retro-aldol mechanism. In Rhodopirellula baltica (strain DSM 10527 / NCIMB 13988 / SH1), this protein is Serine hydroxymethyltransferase.